The following is a 93-amino-acid chain: Large ribosomal subunit protein eL42 (93 aa).

Cys11 and Cys14 together coordinate Zn(2+). Residues 11–75 (CPNCDEHHQL…TDLKYRCSEC (65 aa)) form a C4-type zinc finger. Positions 24–62 (KVRSGRSSGMKWDARRTKRANASIGNHGRFSKVPVGNKP) are disordered. Zn(2+)-binding residues include Cys72 and Cys75.

It belongs to the eukaryotic ribosomal protein eL42 family. In terms of assembly, part of the 50S ribosomal subunit. The cofactor is Zn(2+).

Its function is as follows. Binds to the 23S rRNA. In Halobacterium salinarum (strain ATCC 700922 / JCM 11081 / NRC-1) (Halobacterium halobium), this protein is Large ribosomal subunit protein eL42.